The chain runs to 502 residues: Neuronal acetylcholine receptor subunit alpha-7 (502 aa).

Residues 1–22 (MRCSPGGVWLALAASLLHVSLQ) form the signal peptide. Topologically, residues 23–233 (GEFQRKLYKE…VTMRRRTLYY (211 aa)) are extracellular. Residues arginine 42 and valine 44 each contribute to the Ca(2+) site. Asparagine 46, asparagine 90, and asparagine 133 each carry an N-linked (GlcNAc...) asparagine glycan. Cysteine 150 and cysteine 164 are joined by a disulfide. Residues serine 172 and tyrosine 210 each contribute to the Ca(2+) site. Cysteine 212 and cysteine 213 form a disulfide bridge. Helical transmembrane passes span 234–254 (GLNL…VFLL), 259–279 (GEKI…MLLV), and 292–315 (LIAQ…VIVL). The essential for TMEM35A/NACHO-mediated proper subunit assembly and trafficking to cell membrane stretch occupies residues 260-267 (EKISLGIT). Topologically, residues 316–466 (QYHHHDPDGG…CSEWKFAACV (151 aa)) are cytoplasmic. Residues 467 to 489 (VDRLCLMAFSVFTIICTIGILMS) form a helical membrane-spanning segment.

This sequence belongs to the ligand-gated ion channel (TC 1.A.9) family. Acetylcholine receptor (TC 1.A.9.1) subfamily. Alpha-7/CHRNA7 sub-subfamily. Homopentamer. Can also form heteropentamers with CHRNB2, mainly found in basal forebrain cholinergic neurons. Interacts with RIC3; which is required for proper folding and assembly. Interacts with LYPD6. Interacts with CANX. Glycosylations at Asn-46, Asn-90 and Asn-133 are essential for TMEM35A/NACHO-mediated proper subunit assembly and trafficking to the cell membrane. In terms of tissue distribution, expressed in neuronal cells. Expressed in macrophages (at protein level).

The protein resides in the postsynaptic cell membrane. It is found in the cell membrane. It carries out the reaction Ca(2+)(in) = Ca(2+)(out). The enzyme catalyses K(+)(in) = K(+)(out). It catalyses the reaction Na(+)(in) = Na(+)(out). The catalysed reaction is choline(out) = choline(in). It carries out the reaction NH4(+)(in) = NH4(+)(out). The enzyme catalyses L-arginine(in) = L-arginine(out). It catalyses the reaction guanidine(out) = guanidine(in). With respect to regulation, activated by a myriad of ligands such as acetylcholine, cytisine, nicotine, choline and epibatidine. Oligomeric amyloid-beta protein 42 activates specifially CHRNA7:CHRNB2 nAchRs. Activity is modulated by positive allosteric modulators (PAMs), such as flavonoids, with a wide range of chemical diversity, pharmacological sensitivity and efficacy. AChR activity is inhibited by the antagonists alpha-conotoxons RgIA, ImI and ImII, small disulfide-constrained peptides from cone snails. Alpha-conotoxin PnIC selectively inhibits CHRNA7:CHRNB2 over CHRNA7 homopentamer. In terms of biological role, component of neuronal acetylcholine receptors (nAChRs) that function as pentameric, ligand-gated cation channels with high calcium permeability among other activities. nAChRs are excitatory neurotrasnmitter receptors formed by a collection of nAChR subunits known to mediate synaptic transmission in the nervous system and the neuromuscular junction. Each nAchR subunit confers differential attributes to channel properties, including activation, deactivation and desensitization kinetics, pH sensitivity, cation permeability, and binding to allosteric modulators. CHRNA7 forms homopentameric neuronal acetylcholine receptors abundantly expressed in the central nervous system, characterized by fast desensitization and high calcium permeability. Also forms heteropentamers with CHRNB2, mainly expressed in basal forebrain cholinergic neurons. Involved in the modulation of calcium-dependent signaling pathways and influences the release of neurotransmitters, including dopamine, glutamate and GABA. Also expressed in non-neuronal cells such as immune cells like lymphocytes, monocytes and macrophages. In T cells, activation induces metabotropic signaling that results in an increase of intracellular Ca2+ concentrations, independent of ionotropic receptor functions. In macrophages, required for acetylcholine-mediated inhibition of TNF and other inflammatory cytokine release. Once activated by acetylcholine, nicotine or other agonists, selectively inhibits production of pro-inflammatory cytokines while leaving anti-inflammatory cytokines undisturbed. Stimulates the cholinergic anti-inflammatory pathway, controlling inflammation by inhibiting NFKB nuclear translocation and activating the JAK2-STAT3 pathway, independently of ion channel activity. Also expressed in the urothelium where it modulates reflex bladder activity by increasing intracellular calcium through internal stores and decreasing basal ATP release. In Homo sapiens (Human), this protein is Neuronal acetylcholine receptor subunit alpha-7.